Reading from the N-terminus, the 665-residue chain is Probable potassium transport system protein Kup (665 aa).

Positions 1 to 18 (MASEAPHASAPDCAPASS) are enriched in low complexity. The tract at residues 1 to 31 (MASEAPHASAPDCAPASSDIPQQDGGSTNGH) is disordered. A run of 12 helical transmembrane segments spans residues 40–60 (FFALALGSVGVVFGDIGTSPL), 83–103 (VVSLALWALILIVTIKYVVFI), 131–151 (LVFVLGVAGAALFYGDAVITP), 171–191 (GVTNEVVLLIATVMLLGLFFI), 202–222 (LFGPVCAVWFGVMFSLGLMNL), 245–265 (GLTGFIVLGAVFLTVTGVEAL), 281–301 (WLFFVLPCLAMNYLGQGAFAL), 332–352 (LVLLAGAATVIASQAVITGAF), 380–400 (IFVPQLNTMLLLGVLAIMFTF), 409–429 (AYGLAVTGTMIVTTCMAFIVM), 435–455 (WSMPMALLFLVPFLALDITFL), and 462–482 (FFSGGWLPVLIGAALFTIMAT).

The protein belongs to the HAK/KUP transporter (TC 2.A.72) family.

Its subcellular location is the cell inner membrane. The catalysed reaction is K(+)(in) + H(+)(in) = K(+)(out) + H(+)(out). In terms of biological role, transport of potassium into the cell. Likely operates as a K(+):H(+) symporter. The protein is Probable potassium transport system protein Kup of Caulobacter vibrioides (strain ATCC 19089 / CIP 103742 / CB 15) (Caulobacter crescentus).